The sequence spans 395 residues: Phosphoglycerate kinase (395 aa).

Substrate is bound by residues 21–23 (DFN), R36, 59–62 (HLGR), R120, and R153. Residues K203, E325, and 351-354 (GGDS) each bind ATP.

The protein belongs to the phosphoglycerate kinase family. As to quaternary structure, monomer.

It is found in the cytoplasm. It carries out the reaction (2R)-3-phosphoglycerate + ATP = (2R)-3-phospho-glyceroyl phosphate + ADP. The protein operates within carbohydrate degradation; glycolysis; pyruvate from D-glyceraldehyde 3-phosphate: step 2/5. This is Phosphoglycerate kinase from Roseiflexus castenholzii (strain DSM 13941 / HLO8).